Reading from the N-terminus, the 678-residue chain is NADPH--cytochrome P450 reductase (678 aa).

At glycine 2 the chain carries N-acetylglycine. Residues 2 to 21 (GDSHVDTGATSTEAVAEEVS) lie on the Lumenal side of the membrane. A helical transmembrane segment spans residues 22-42 (LFSMTDMILLSVLVGFLTYFF). At 43-678 (LFRKKKEEIP…KGRYSLDVWS (636 aa)) the chain is on the cytoplasmic side. At serine 63 the chain carries Phosphoserine. The region spanning 80 to 224 (IIVFYGSQTG…DFITWREQFW (145 aa)) is the Flavodoxin-like domain. FMN-binding positions include 86–91 (SQTGTA), 138–141 (ATYG), 173–182 (LGNKTYEHFN), and aspartate 208. In terms of domain architecture, FAD-binding FR-type spans 279-521 (KNPFLAAVTT…FVRKSQFRLP (243 aa)). Arginine 298 contributes to the NADP(+) binding site. FAD-binding positions include arginine 424, 454-457 (RYYS), 472-474 (CAV), tyrosine 478, and 488-491 (GVAT). NADP(+) is bound by residues threonine 535, 596–597 (SR), 602–606 (KVYVQ), and aspartate 639. Residue tryptophan 677 coordinates FAD.

This sequence belongs to the NADPH--cytochrome P450 reductase family. The protein in the N-terminal section; belongs to the flavodoxin family. It in the C-terminal section; belongs to the flavoprotein pyridine nucleotide cytochrome reductase family. It depends on FAD as a cofactor. Requires FMN as cofactor.

The protein resides in the endoplasmic reticulum membrane. It carries out the reaction 2 oxidized [cytochrome P450] + NADPH = 2 reduced [cytochrome P450] + NADP(+) + H(+). Its function is as follows. This enzyme is required for electron transfer from NADP to cytochrome P450 in microsomes. It can also provide electron transfer to heme oxygenase and cytochrome B5. The polypeptide is NADPH--cytochrome P450 reductase (Cavia porcellus (Guinea pig)).